The primary structure comprises 496 residues: Cytochrome P450 71D179 (496 aa).

A helical; Signal-anchor for type II membrane protein membrane pass occupies residues 1-21 (MDISISWVVIIVSVLSYLILM). Cys-435 contributes to the heme binding site.

This sequence belongs to the cytochrome P450 family. Heme serves as cofactor.

The protein localises to the membrane. It participates in secondary metabolite biosynthesis; terpenoid biosynthesis. Functionally, involved in the biosynthesis of phenolic monoterpenes natural products thymol and carvacrol which have a broad range of biological activities acting as antimicrobial compounds, insecticides, antioxidants and pharmaceutical agents. Catalyzes probably the C3-hydroxylation of gamma-terpinene to produce thymol. The chain is Cytochrome P450 71D179 from Thymus vulgaris (Thyme).